We begin with the raw amino-acid sequence, 340 residues long: ATPase GET3 (340 aa).

Residue 35–42 (KGGVGKTT) coordinates ATP. Residue Asp-64 is part of the active site. Residues Glu-245 and Asn-272 each contribute to the ATP site. 2 residues coordinate Zn(2+): Cys-283 and Cys-286.

This sequence belongs to the arsA ATPase family. Homodimer.

It localises to the cytoplasm. The protein localises to the endoplasmic reticulum. In terms of biological role, ATPase required for the post-translational delivery of tail-anchored (TA) proteins to the endoplasmic reticulum. Recognizes and selectively binds the transmembrane domain of TA proteins in the cytosol. This complex then targets to the endoplasmic reticulum by membrane-bound receptors, where the tail-anchored protein is released for insertion. This process is regulated by ATP binding and hydrolysis. ATP binding drives the homodimer towards the closed dimer state, facilitating recognition of newly synthesized TA membrane proteins. ATP hydrolysis is required for insertion. Subsequently, the homodimer reverts towards the open dimer state, lowering its affinity for the membrane-bound receptor, and returning it to the cytosol to initiate a new round of targeting. This Chaetomium globosum (strain ATCC 6205 / CBS 148.51 / DSM 1962 / NBRC 6347 / NRRL 1970) (Soil fungus) protein is ATPase GET3.